The chain runs to 183 residues: Large ribosomal subunit protein uL5 (183 aa).

It belongs to the universal ribosomal protein uL5 family. In terms of assembly, part of the 50S ribosomal subunit; part of the 5S rRNA/L5/L18/L25 subcomplex. Contacts the 5S rRNA and the P site tRNA. Forms a bridge to the 30S subunit in the 70S ribosome.

This is one of the proteins that bind and probably mediate the attachment of the 5S RNA into the large ribosomal subunit, where it forms part of the central protuberance. In the 70S ribosome it contacts protein S13 of the 30S subunit (bridge B1b), connecting the 2 subunits; this bridge is implicated in subunit movement. Contacts the P site tRNA; the 5S rRNA and some of its associated proteins might help stabilize positioning of ribosome-bound tRNAs. The sequence is that of Large ribosomal subunit protein uL5 from Pseudothermotoga lettingae (strain ATCC BAA-301 / DSM 14385 / NBRC 107922 / TMO) (Thermotoga lettingae).